The sequence spans 919 residues: Glutamate receptor ionotropic, kainate 3 (919 aa).

The signal sequence occupies residues 1–31 (MTAPWRRLRSLVWEYWAGFLVCAFWIPDSRG). Over 32–563 (MPHVIRIGGI…VFSFLNPLSP (532 aa)) the chain is Extracellular. Residues N70, N76, N278, N381, N415, N426, and N433 are each glycosylated (N-linked (GlcNAc...) asparagine). C99 and C350 are joined by a disulfide. 3 residues coordinate L-glutamate: P518, T520, and R525. Residues N548 and N551 are each glycosylated (N-linked (GlcNAc...) asparagine). The helical transmembrane segment at 564–584 (DIWMYVLLAYLGVSCVLFVIA) threads the bilayer. At 585–636 (RFSPYEWYDAHPCNPGSEVVENNFTLLNSFWFGMGSLMQQGSELMPKALSTR) the chain is on the cytoplasmic side. The chain crosses the membrane as a helical span at residues 637–657 (IIGGIWWFFTLIIISSYTANL). Over 658 to 820 (AAFLTVERME…KEASALGIQK (163 aa)) the chain is Extracellular. Positions 691, 692, and 739 each coordinate L-glutamate. N-linked (GlcNAc...) asparagine glycosylation is present at N752. The chain crosses the membrane as a helical span at residues 821 to 841 (IGGIFIVLAAGLVLSVLVAVG). At 842–919 (EFIYKLRKTA…CSTSLAPVFP (78 aa)) the chain is on the cytoplasmic side. At S869 the chain carries Phosphoserine. K887 is covalently cross-linked (Glycyl lysine isopeptide (Lys-Gly) (interchain with G-Cter in SUMO1)).

This sequence belongs to the glutamate-gated ion channel (TC 1.A.10.1) family. GRIK3 subfamily. As to quaternary structure, homotetramer, and heterotetramer with GRIK4 or GRIK5. Can form functional heteromeric receptors with GRIK2. Interacts with PRKCABP. Interacts with NETO2. Homomeric GluR7A forms functional kainate receptors which have very low sensitivity to glutamate. Can form functional heteromeric receptors with GRIK4 and GRIK5. In terms of assembly, homomeric GluR7B forms functional kainate receptors. Post-translationally, mass spectrometry data suggest the protein is N-glycosylated at five distinct sites. Expressed in the olfactory bulb (at protein level). Expressed in the deep cortical layers, dentate gyrus, reticular thalamic nucleus, mammillary bodies, pons, and cerebellum of the adult.

It localises to the cell membrane. Its subcellular location is the postsynaptic cell membrane. It carries out the reaction Ca(2+)(in) = Ca(2+)(out). Ionotropic glutamate receptor that functions as a cation-permeable ligand-gated ion channel, gated by L-glutamate and the glutamatergic agonist kainic acid. Binding of the excitatory neurotransmitter L-glutamate induces a conformation change, leading to the opening of the cation channel, and thereby converts the chemical signal to an electrical impulse. The receptor then desensitizes rapidly and enters a transient inactive state, characterized by the presence of bound agonist. In association with GRIK2, involved in presynaptic facilitation of glutamate release at hippocampal mossy fiber synapses. Functionally, ionotropic glutamate receptor that functions as a ligand-gated cation channel, gated by L-glutamate and the glutamatergic agonist kainic acid. This is Glutamate receptor ionotropic, kainate 3 (Grik3) from Rattus norvegicus (Rat).